The primary structure comprises 353 residues: Inositol 3-kinase (353 aa).

Residues Ser-197, 247–250 (GAGD), and Asn-274 contribute to the ATP site. Asp-250 functions as the Proton acceptor in the catalytic mechanism.

Belongs to the carbohydrate kinase pfkB family.

It carries out the reaction myo-inositol + ATP = 1D-myo-inositol 3-phosphate + ADP + H(+). Functionally, kinase that phosphorylates myo-inositol to produce multiple myo-inositol monophosphates. Participates in phytic acid biosynthesis in developing seeds. Phytic acid is the primary storage form of phosphorus in cereal grains and other plant seeds. This Arabidopsis thaliana (Mouse-ear cress) protein is Inositol 3-kinase.